A 298-amino-acid chain; its full sequence is MTVSNSNGLPDIVTVQKRLYPLIFTEIVSEQPTKQPVATAYGFKAVPEADDGSGWTQFGFRLDRWYAQVESSKMKTEISLETLQDMQALGVSNSVIVDSLADQIADEINTSIIGALNSISTVGAALTLTGNTDFEKGQDLYTKVHLAASEIEKTTGCKGTYVVAGGKCFGYLTGCGVVQRVGESDVYKAWSGLYIVHDKYATSDYVTVGVKKDMGDYEISSLVFSPYQFDQANDGAIAYQYKGTDPKSFHPVYGVIARYALTVPPLEDNQTGAVEIDWSNLGALANSSKLSYTYAVTV.

It belongs to the Tevenvirinae capsid vertex family. As to quaternary structure, homopentamer. Interacts with the portal protein. Interacts with the major capsid protein that forms hexamers.

The protein localises to the virion. In terms of biological role, capsid protein that self-associates to form pentons, building the capsid in association with hexamers of the major capsid protein and one dodecamer of the portal protein. This chain is Capsid vertex protein, found in Vibrio parahaemolyticus (KVP40).